The chain runs to 882 residues: DNA mismatch repair protein MutS (882 aa).

640-647 is an ATP binding site; sequence GPNMGGKS.

It belongs to the DNA mismatch repair MutS family.

Functionally, this protein is involved in the repair of mismatches in DNA. It is possible that it carries out the mismatch recognition step. This protein has a weak ATPase activity. The sequence is that of DNA mismatch repair protein MutS from Albidiferax ferrireducens (strain ATCC BAA-621 / DSM 15236 / T118) (Rhodoferax ferrireducens).